A 198-amino-acid polypeptide reads, in one-letter code: Ribonuclease HII (198 aa).

Positions 10–198 (HLVAGVDEVG…PVKRALGLAS (189 aa)) constitute an RNase H type-2 domain. Residues D16, E17, and D108 each coordinate a divalent metal cation.

It belongs to the RNase HII family. Mn(2+) is required as a cofactor. Mg(2+) serves as cofactor.

It localises to the cytoplasm. The enzyme catalyses Endonucleolytic cleavage to 5'-phosphomonoester.. Its function is as follows. Endonuclease that specifically degrades the RNA of RNA-DNA hybrids. This chain is Ribonuclease HII, found in Escherichia coli (strain ATCC 8739 / DSM 1576 / NBRC 3972 / NCIMB 8545 / WDCM 00012 / Crooks).